We begin with the raw amino-acid sequence, 321 residues long: Probable heme-iron transport system permease protein IsdF (321 aa).

Helical transmembrane passes span 9-29 (LLFL…FVTG), 61-81 (ILIA…LQAA), 89-109 (ANII…MLFI), 114-134 (FYLP…IILL), 143-163 (VSMI…LEIL), 179-199 (IWSD…LTLL), 233-253 (VFLA…GIIV), 267-287 (LIPF…LLGR), and 294-314 (EIPA…YLIC).

Belongs to the binding-protein-dependent transport system permease family. FecCD subfamily.

It localises to the cell membrane. Part of the binding-protein-dependent transport system for heme-iron. Responsible for the translocation of the substrate across the membrane. This is Probable heme-iron transport system permease protein IsdF (isdF) from Staphylococcus aureus (strain NCTC 8325 / PS 47).